The sequence spans 41 residues: Large ribosomal subunit protein bL36 (41 aa).

The protein belongs to the bacterial ribosomal protein bL36 family.

The protein is Large ribosomal subunit protein bL36 of Xylella fastidiosa (strain 9a5c).